Consider the following 397-residue polypeptide: Dual specificity mitogen-activated protein kinase kinase 4 (397 aa).

Residues 1 to 38 form a disordered region; sequence MAAPSPSGGGGSGGGGGTPGPIGPPASGHPAVSSMQGK. At alanine 2 the chain carries N-acetylalanine. Residues 7–20 show a composition bias toward gly residues; that stretch reads SGGGGSGGGGGTPG. The segment at 35 to 50 is d domain; the sequence is MQGKRKALKLNFANPP. Residue arginine 56 is modified to Asymmetric dimethylarginine; alternate. An Omega-N-methylarginine; alternate modification is found at arginine 56. Phosphoserine is present on serine 88. The region spanning 100–366 is the Protein kinase domain; the sequence is LKDLGEIGRG…KELLKHPFIL (267 aa). Residues 106-114 and lysine 129 contribute to the ATP site; that span reads IGRGAYGSV. The active-site Proton acceptor is aspartate 227. Serine 255 is subject to Phosphoserine. Phosphothreonine is present on threonine 259. The segment at 362 to 385 is DVD domain; the sequence is HPFILMYEERTVEVACYVCKILDQ.

It belongs to the protein kinase superfamily. STE Ser/Thr protein kinase family. MAP kinase kinase subfamily. As to quaternary structure, interacts with SPAG9. Interacts (via its D domain) with its substrates MAPK8/JNK1, MAPK9/JNK2, MAPK10/JNK3, MAPK11 and MAPK14. Interacts (via its DVD domain) with MAP3Ks activators like MAP3K1/MEKK1 and MAP3K11/MLK3. Interacts with ARRB1, ARRB2 and MAPK8IP3/JIP3. Post-translationally, activated by phosphorylation on Ser-255 and Thr-259 by MAP kinase kinase kinases (MAP3Ks). In terms of tissue distribution, strong expression is detected in most of the central nervous system and in liver and thymus during early stages of development. While expression in nervous system increases over time, expression in fetal liver and thymus gradually decreases as embryogenesis proceeds. High level of expression in the central nervous system persists throughout postnatal development and remained at a stable level in adult brain.

It is found in the cytoplasm. Its subcellular location is the nucleus. It catalyses the reaction L-seryl-[protein] + ATP = O-phospho-L-seryl-[protein] + ADP + H(+). It carries out the reaction L-threonyl-[protein] + ATP = O-phospho-L-threonyl-[protein] + ADP + H(+). The enzyme catalyses L-tyrosyl-[protein] + ATP = O-phospho-L-tyrosyl-[protein] + ADP + H(+). Its activity is regulated as follows. Activated in response to a variety of cellular stresses, including UV and gamma-irradiation, heat shock, hyperosmolarity, T-cell receptor stimulation, peroxide and inflammatory cytokines. Also activated by developmental cues. MAP2K4/MKK4 is activated by the majority of MKKKs, such as MAP3K5/ASK1, MAP3K1/MEKK1, MAP3K7/TAK1, MAP3K10/MLK2, MAP3K11/MLK3, MAP3K12/DLK and MAP3K13/LZK. In terms of biological role, dual specificity protein kinase which acts as an essential component of the MAP kinase signal transduction pathway. Essential component of the stress-activated protein kinase/c-Jun N-terminal kinase (SAP/JNK) signaling pathway. With MAP2K7/MKK7, is the one of the only known kinase to directly activate the stress-activated protein kinase/c-Jun N-terminal kinases MAPK8/JNK1, MAPK9/JNK2 and MAPK10/JNK3. MAP2K4/MKK4 and MAP2K7/MKK7 both activate the JNKs by phosphorylation, but they differ in their preference for the phosphorylation site in the Thr-Pro-Tyr motif. MAP2K4 shows preference for phosphorylation of the Tyr residue and MAP2K7/MKK7 for the Thr residue. The phosphorylation of the Thr residue by MAP2K7/MKK7 seems to be the prerequisite for JNK activation at least in response to pro-inflammatory cytokines, while other stimuli activate both MAP2K4/MKK4 and MAP2K7/MKK7 which synergistically phosphorylate JNKs. MAP2K4 is required for maintaining peripheral lymphoid homeostasis. The MKK/JNK signaling pathway is also involved in mitochondrial death signaling pathway, including the release cytochrome c, leading to apoptosis. Whereas MAP2K7/MKK7 exclusively activates JNKs, MAP2K4/MKK4 additionally activates the p38 MAPKs MAPK11, MAPK12, MAPK13 and MAPK14. This chain is Dual specificity mitogen-activated protein kinase kinase 4 (Map2k4), found in Mus musculus (Mouse).